We begin with the raw amino-acid sequence, 504 residues long: Trifunctional (S)-stylopine synthase/(S)-nandinine synthase/(S)-canadine synthase (504 aa).

A helical membrane pass occupies residues 16-36 (SSTTTTTTILLSLLFTIFIIL). Residue cysteine 448 participates in heme binding.

Belongs to the cytochrome P450 family. Heme is required as a cofactor. As to expression, expressed in roots and at lower levels in stems, leaves and plantlets.

The protein resides in the endoplasmic reticulum membrane. It carries out the reaction (S)-cheilanthifoline + reduced [NADPH--hemoprotein reductase] + O2 = (S)-stylopine + oxidized [NADPH--hemoprotein reductase] + 2 H2O + H(+). It catalyses the reaction (S)-tetrahydrocolumbamine + reduced [NADPH--hemoprotein reductase] + O2 = (S)-canadine + oxidized [NADPH--hemoprotein reductase] + 2 H2O + H(+). The enzyme catalyses (S)-scoulerine + reduced [NADPH--hemoprotein reductase] + O2 = (S)-nandinine + oxidized [NADPH--hemoprotein reductase] + 2 H2O + H(+). Functionally, methylenedioxy bridge-forming cytochrome P450 involved in the biosynthesis of isoquinoline alkaloids. Converts (S)-cheilanthifoline to (S)-stylopine, (S)-scoulerine to (S)-nandinine and (S)-tetrahydrocolumbamine to (S)-canadine. Can be involved in both sanguinarine and berberine biosynthesis. Catalyzes an oxidative reaction that does not incorporate oxygen into the product. The protein is Trifunctional (S)-stylopine synthase/(S)-nandinine synthase/(S)-canadine synthase of Argemone mexicana (Mexican prickly poppy).